A 248-amino-acid polypeptide reads, in one-letter code: MSFVVIIPARFSSTRLPGKPLLDINGKPMIVHVLERARESGAERIIVATDHEDVARAVEAAGGEVCMTRADHQSGTERLAEVVEKCGFSDDTVIVNVQGDEPMIPAVIIRQVAENLAQRQVGMATLAAPIHGAEEAFNPNAVKVVLDAEGYALYFSRATIPWDRDRFAKSLETVGDTFLRHLGIYGYRAGFIRRYVNWQPSPLEHIEMLEQLRVLWYGEKIHVAVAKEVPGTGVDTAEDLERVRAEMR.

This sequence belongs to the KdsB family.

It is found in the cytoplasm. It carries out the reaction 3-deoxy-alpha-D-manno-oct-2-ulosonate + CTP = CMP-3-deoxy-beta-D-manno-octulosonate + diphosphate. It functions in the pathway nucleotide-sugar biosynthesis; CMP-3-deoxy-D-manno-octulosonate biosynthesis; CMP-3-deoxy-D-manno-octulosonate from 3-deoxy-D-manno-octulosonate and CTP: step 1/1. Its pathway is bacterial outer membrane biogenesis; lipopolysaccharide biosynthesis. Functionally, activates KDO (a required 8-carbon sugar) for incorporation into bacterial lipopolysaccharide in Gram-negative bacteria. In Citrobacter koseri (strain ATCC BAA-895 / CDC 4225-83 / SGSC4696), this protein is 3-deoxy-manno-octulosonate cytidylyltransferase.